The following is a 102-amino-acid chain: Iron-sulfur cluster assembly protein CyaY (102 aa).

The protein belongs to the frataxin family.

Involved in iron-sulfur (Fe-S) cluster assembly. May act as a regulator of Fe-S biogenesis. The chain is Iron-sulfur cluster assembly protein CyaY from Histophilus somni (strain 2336) (Haemophilus somnus).